Reading from the N-terminus, the 217-residue chain is Ras-related protein RIC2 (217 aa).

GTP contacts are provided by residues 21 to 28, 69 to 73, and 127 to 130; these read GDSGVGKS, DTAGQ, and NKSD. 2 S-geranylgeranyl cysteine lipidation sites follow: Cys214 and Cys215.

It belongs to the small GTPase superfamily. Rab family.

It localises to the cell membrane. Its function is as follows. Possesses GTPase activity. This chain is Ras-related protein RIC2 (RIC2), found in Oryza sativa subsp. japonica (Rice).